Here is a 416-residue protein sequence, read N- to C-terminus: Neamine transaminase NeoN (416 aa).

Lysine 231 is subject to N6-(pyridoxal phosphate)lysine.

Belongs to the class-III pyridoxal-phosphate-dependent aminotransferase family. Pyridoxal 5'-phosphate serves as cofactor.

The catalysed reaction is neomycin C + 2-oxoglutarate = 6'''-deamino-6'''-oxoneomycin C + L-glutamate. The enzyme catalyses neamine + 2-oxoglutarate = 6'-oxoparomamine + L-glutamate. It participates in antibiotic biosynthesis; neomycin biosynthesis. Its function is as follows. 6'-oxoglucosaminyl:L-glutamate aminotransferase that catalyzes pyridoxal-5'-phosphate-mediated transamination for the conversion of paromamine to neamine in the biosynthetic pathway of neomycin. Also able to catalyze deamination at C-6''' of neomycin. This Streptomyces fradiae (Streptomyces roseoflavus) protein is Neamine transaminase NeoN (neoN).